The chain runs to 501 residues: Glycerol kinase (501 aa).

Thr16 lines the ADP pocket. Positions 16, 17, and 18 each coordinate ATP. Thr16 is a binding site for sn-glycerol 3-phosphate. Residue Arg20 coordinates ADP. Sn-glycerol 3-phosphate-binding residues include Arg84, Glu85, Tyr135, and Asp242. Positions 84, 85, 135, 242, and 243 each coordinate glycerol. Positions 264 and 307 each coordinate ADP. ATP is bound by residues Thr264, Gly307, Gln311, and Gly408. Gly408 is a binding site for ADP.

The protein belongs to the FGGY kinase family.

The catalysed reaction is glycerol + ATP = sn-glycerol 3-phosphate + ADP + H(+). Its pathway is polyol metabolism; glycerol degradation via glycerol kinase pathway; sn-glycerol 3-phosphate from glycerol: step 1/1. Key enzyme in the regulation of glycerol uptake and metabolism. Catalyzes the phosphorylation of glycerol to yield sn-glycerol 3-phosphate. The chain is Glycerol kinase from Saccharolobus islandicus (strain L.S.2.15 / Lassen #1) (Sulfolobus islandicus).